The chain runs to 340 residues: Serine/threonine-protein kinase PDIK1L (340 aa).

The Protein kinase domain occupies 8–333; the sequence is YDLIREVGRG…LELRLVQIAF (326 aa). ATP-binding positions include 14-22 and K37; that span reads VGRGSYGVV. Catalysis depends on D164, which acts as the Proton acceptor.

The protein belongs to the protein kinase superfamily. Ser/Thr protein kinase family.

Its subcellular location is the nucleus. It catalyses the reaction L-seryl-[protein] + ATP = O-phospho-L-seryl-[protein] + ADP + H(+). It carries out the reaction L-threonyl-[protein] + ATP = O-phospho-L-threonyl-[protein] + ADP + H(+). In Pongo abelii (Sumatran orangutan), this protein is Serine/threonine-protein kinase PDIK1L (PDIK1L).